The primary structure comprises 521 residues: Glycogen synthase (521 aa).

Lys18 provides a ligand contact to ADP-alpha-D-glucose.

It belongs to the glycosyltransferase 1 family. Bacterial/plant glycogen synthase subfamily.

It carries out the reaction [(1-&gt;4)-alpha-D-glucosyl](n) + ADP-alpha-D-glucose = [(1-&gt;4)-alpha-D-glucosyl](n+1) + ADP + H(+). Its pathway is glycan biosynthesis; glycogen biosynthesis. Its function is as follows. Synthesizes alpha-1,4-glucan chains using ADP-glucose. The chain is Glycogen synthase from Bordetella petrii (strain ATCC BAA-461 / DSM 12804 / CCUG 43448).